The sequence spans 128 residues: Small ribosomal subunit protein uS11 (128 aa).

This sequence belongs to the universal ribosomal protein uS11 family. Part of the 30S ribosomal subunit. Interacts with proteins S7 and S18. Binds to IF-3.

Functionally, located on the platform of the 30S subunit, it bridges several disparate RNA helices of the 16S rRNA. Forms part of the Shine-Dalgarno cleft in the 70S ribosome. The protein is Small ribosomal subunit protein uS11 of Desulfatibacillum aliphaticivorans.